The sequence spans 194 residues: Ribose 1,5-bisphosphate phosphokinase PhnN (194 aa).

ATP is bound at residue 24–31; that stretch reads GPSGAGKD.

This sequence belongs to the ribose 1,5-bisphosphokinase family.

It carries out the reaction alpha-D-ribose 1,5-bisphosphate + ATP = 5-phospho-alpha-D-ribose 1-diphosphate + ADP. It functions in the pathway metabolic intermediate biosynthesis; 5-phospho-alpha-D-ribose 1-diphosphate biosynthesis; 5-phospho-alpha-D-ribose 1-diphosphate from D-ribose 5-phosphate (route II): step 3/3. Functionally, catalyzes the phosphorylation of ribose 1,5-bisphosphate to 5-phospho-D-ribosyl alpha-1-diphosphate (PRPP). This Rhodopseudomonas palustris (strain ATCC BAA-98 / CGA009) protein is Ribose 1,5-bisphosphate phosphokinase PhnN.